We begin with the raw amino-acid sequence, 298 residues long: Glutamyl-Q tRNA(Asp) synthetase (298 aa).

L-glutamate contacts are provided by residues 9-13 (RFAPS) and E45. The 'HIGH' region motif lies at 12–22 (PSPSGELHFGS). Positions 101, 103, 115, and 119 each coordinate Zn(2+). L-glutamate is bound by residues Y172 and R190. The 'KMSKS' region signature appears at 228 to 232 (KLSKQ). ATP is bound at residue K231.

It belongs to the class-I aminoacyl-tRNA synthetase family. GluQ subfamily. It depends on Zn(2+) as a cofactor.

Its function is as follows. Catalyzes the tRNA-independent activation of glutamate in presence of ATP and the subsequent transfer of glutamate onto a tRNA(Asp). Glutamate is transferred on the 2-amino-5-(4,5-dihydroxy-2-cyclopenten-1-yl) moiety of the queuosine in the wobble position of the QUC anticodon. The polypeptide is Glutamyl-Q tRNA(Asp) synthetase (Salmonella choleraesuis (strain SC-B67)).